Consider the following 465-residue polypeptide: Ribosome biogenesis protein YTM1 (465 aa).

Positions 18-99 (ARLRFSTRDE…ETTLDVEYVR (82 aa)) are ubiquitin-like (UBL) domain. WD repeat units lie at residues 111–153 (LHDD…IHTS), 160–198 (GHQSAIKCVRFLSASQIVSSGIDRTVRLWKYTDQEKGIT), 205–242 (GHKGSVDSIAVHGNRILSASADHTVGFWSTKKSESPAV), 277–317 (GHTA…LVDT), 319–358 (TTSHSLLCAQHLPEHTLLAAGSAARHVTLIDPRASATTVS), 364–404 (GHTN…TDTD), and 427–465 (GDGVKVFDVCWDKKVGIVSVGEDKVIQINRGEGVVPKTA). A disordered region spans residues 235 to 272 (KKSESPAVPQNLLPSSSARSSKRRKLNSSASTSQRGPL).

This sequence belongs to the WD repeat WDR12/YTM1 family. As to quaternary structure, component of the NOP7 complex, composed of ERB1, NOP7 and YTM1. The complex is held together by ERB1, which interacts with NOP7 via its N-terminal domain and with YTM1 via a high-affinity interaction between the seven-bladed beta-propeller domains of the 2 proteins. The NOP7 complex associates with the 66S pre-ribosome. Interacts (via UBL domain) with MDN1 (via VWFA/MIDAS domain).

It localises to the nucleus. The protein resides in the nucleolus. The protein localises to the nucleoplasm. Its function is as follows. Component of the NOP7 complex, which is required for maturation of the 25S and 5.8S ribosomal RNAs and formation of the 60S ribosome. The polypeptide is Ribosome biogenesis protein YTM1 (Coccidioides immitis (strain RS) (Valley fever fungus)).